Consider the following 438-residue polypeptide: MSITIRKLDSTSAGFGAELRALLAFEASEDAAIEQSVAQILADVKSRGDAAVLEYTNRFDRLSASSIAALELPQDALQTALDSLAPKARAALEAAAARVRAYHEKQKIECGTHSWQYTESDGTVLGQKVTPLDRVGLYVPGGKAAYPSSVLMNAIPARVAGVGEIVMVVPTPDGVKNDLVLAAALLGGVDRVFTIGGAQAVGALAYGTATVPAVDKICGPGNAYVASAKRRVFGTVGIDMIAGPSEILVLCDGTTDPNWVAMDLFSQAEHDELAQSILLCPDGAFLERVEKAIDELLPSMPRQDVIRASLEGRGALIKVRDMAEACRIANDIAPEHLEISALEPQQWGQQIRHAGAIFLGRYTSESLGDYCAGPNHVLPTSRTARFSSPLGVYDFIKRSSLIEVSAEGAQTLGEIASELAYGEGLQAHAKSAEFRMKH.

Residues Tyr-138, Gln-199, and Asn-222 each coordinate NAD(+). Substrate-binding residues include Ser-245, Gln-267, and His-270. 2 residues coordinate Zn(2+): Gln-267 and His-270. Active-site proton acceptor residues include Glu-335 and His-336. 4 residues coordinate substrate: His-336, Asp-369, Glu-423, and His-428. Asp-369 serves as a coordination point for Zn(2+). His-428 lines the Zn(2+) pocket.

Belongs to the histidinol dehydrogenase family. It depends on Zn(2+) as a cofactor.

The catalysed reaction is L-histidinol + 2 NAD(+) + H2O = L-histidine + 2 NADH + 3 H(+). The protein operates within amino-acid biosynthesis; L-histidine biosynthesis; L-histidine from 5-phospho-alpha-D-ribose 1-diphosphate: step 9/9. In terms of biological role, catalyzes the sequential NAD-dependent oxidations of L-histidinol to L-histidinaldehyde and then to L-histidine. The protein is Histidinol dehydrogenase of Burkholderia lata (strain ATCC 17760 / DSM 23089 / LMG 22485 / NCIMB 9086 / R18194 / 383).